A 354-amino-acid chain; its full sequence is Large ribosomal subunit protein uL10 (354 aa).

Acidic residues-rich tracts occupy residues 286-296 and 307-345; these read DEEALPEELQD and AEADDEDDTGNVEQTDESDADDADDADDADDADEEDGDG. Residues 286-354 form a disordered region; that stretch reads DEEALPEELQ…GGDALGDMFG (69 aa).

It belongs to the universal ribosomal protein uL10 family. As to quaternary structure, part of the 50S ribosomal subunit. Forms part of the ribosomal stalk which helps the ribosome interact with GTP-bound translation factors. Forms a heptameric L10(L12)2(L12)2(L12)2 complex, where L10 forms an elongated spine to which the L12 dimers bind in a sequential fashion.

In terms of biological role, forms part of the ribosomal stalk, playing a central role in the interaction of the ribosome with GTP-bound translation factors. The sequence is that of Large ribosomal subunit protein uL10 from Natronomonas pharaonis (strain ATCC 35678 / DSM 2160 / CIP 103997 / JCM 8858 / NBRC 14720 / NCIMB 2260 / Gabara) (Halobacterium pharaonis).